Reading from the N-terminus, the 1131-residue chain is Phytochrome (1131 aa).

The disordered stretch occupies residues 1–30 (MASNSRHTQSQSTGSNNRRSSTNTNTTTNK). The segment covering 9–29 (QSQSTGSNNRRSSTNTNTTTN) has biased composition (low complexity). The 180-residue stretch at 227–406 (DVGLLCDTVV…ALGLQLNMEL (180 aa)) folds into the GAF domain. Residue Cys332 participates in phytochromobilin binding. PAS domains lie at 621–692 (VASE…LRGE) and 755–826 (DYRS…TIVL). The region spanning 903 to 1123 (YIRQEIKNPL…LVNVEFPMAQ (221 aa)) is the Histidine kinase domain.

Belongs to the phytochrome family. In terms of assembly, homodimer. Contains one covalently linked phytochromobilin chromophore.

Functionally, regulatory photoreceptor which exists in two forms that are reversibly interconvertible by light: the Pr form that absorbs maximally in the red region of the spectrum and the Pfr form that absorbs maximally in the far-red region. Photoconversion of Pr to Pfr induces an array of morphogenic responses, whereas reconversion of Pfr to Pr cancels the induction of those responses. Pfr controls the expression of a number of nuclear genes including those encoding the small subunit of ribulose-bisphosphate carboxylase, chlorophyll A/B binding protein, protochlorophyllide reductase, rRNA, etc. It also controls the expression of its own gene(s) in a negative feedback fashion. The polypeptide is Phytochrome (Pinus sylvestris (Scotch pine)).